A 275-amino-acid polypeptide reads, in one-letter code: Diaminopimelate epimerase (275 aa).

Asn-13, Gln-46, and Asn-65 together coordinate substrate. Cys-74 (proton donor) is an active-site residue. Substrate is bound by residues 75 to 76, Asn-158, Asn-191, and 209 to 210; these read GN and ER. Cys-218 acts as the Proton acceptor in catalysis. Position 219–220 (219–220) interacts with substrate; the sequence is GT.

Belongs to the diaminopimelate epimerase family. In terms of assembly, homodimer.

The protein resides in the cytoplasm. It catalyses the reaction (2S,6S)-2,6-diaminopimelate = meso-2,6-diaminopimelate. The protein operates within amino-acid biosynthesis; L-lysine biosynthesis via DAP pathway; DL-2,6-diaminopimelate from LL-2,6-diaminopimelate: step 1/1. Its function is as follows. Catalyzes the stereoinversion of LL-2,6-diaminopimelate (L,L-DAP) to meso-diaminopimelate (meso-DAP), a precursor of L-lysine and an essential component of the bacterial peptidoglycan. The protein is Diaminopimelate epimerase of Nitrosomonas europaea (strain ATCC 19718 / CIP 103999 / KCTC 2705 / NBRC 14298).